We begin with the raw amino-acid sequence, 214 residues long: Adenylate kinase (214 aa).

G10–T15 is an ATP binding site. The interval S30–V59 is NMP. Residues T31, R36, A57 to V59, G85 to R88, and Q92 contribute to the AMP site. The interval G126–D163 is LID. R127 contributes to the ATP binding site. Zn(2+) is bound by residues C130 and C133. T136–Y137 provides a ligand contact to ATP. Positions 150 and 153 each coordinate Zn(2+). Positions 160 and 171 each coordinate AMP. K199 is a binding site for ATP.

It belongs to the adenylate kinase family. In terms of assembly, monomer.

Its subcellular location is the cytoplasm. The enzyme catalyses AMP + ATP = 2 ADP. It participates in purine metabolism; AMP biosynthesis via salvage pathway; AMP from ADP: step 1/1. Catalyzes the reversible transfer of the terminal phosphate group between ATP and AMP. Plays an important role in cellular energy homeostasis and in adenine nucleotide metabolism. The sequence is that of Adenylate kinase from Agathobacter rectalis (strain ATCC 33656 / DSM 3377 / JCM 17463 / KCTC 5835 / VPI 0990) (Eubacterium rectale).